Here is a 220-residue protein sequence, read N- to C-terminus: uncharacterized protein (220 aa).

A run of 7 helical transmembrane segments spans residues 25–45 (YFLL…SMSL), 50–70 (PGLI…YKLS), 74–94 (LGIL…GPIL), 105–125 (IVVL…AYVL), 135–155 (SGTI…SFFF), 158–178 (PMLY…GILY), and 196–216 (VSIF…FSIL).

It belongs to the BI1 family.

The protein localises to the cell membrane. This is an uncharacterized protein from Pasteurella multocida (strain Pm70).